Reading from the N-terminus, the 452-residue chain is Keratin, type I cytoskeletal 42 (452 aa).

Residues 4–93 (TTSIRQFSTS…GVSDALLGGS (90 aa)) form a head region. Coiled coils occupy residues 93–132 (SEKETMQNLNDRLATYLDRVRALEEANTDLEVKIREWYKK) and 188–407 (NLRM…HLAT). The tract at residues 94–129 (EKETMQNLNDRLATYLDRVRALEEANTDLEVKIREW) is coil 1A. The region spanning 94–405 (EKETMQNLND…RLLEGEDAHL (312 aa)) is the IF rod domain. Residues 130-147 (YKKQGPGPARDYSPYFKT) form a linker 1 region. Positions 148–239 (IEDLRNKILA…KNHEEEMNAL (92 aa)) are coil 1B. The tract at residues 240–262 (RGQVGGDVNVEMDAAPGVDLSRI) is linker 12. The coil 2 stretch occupies residues 263 to 401 (LNEMRDQYEK…ATYRRLLEGE (139 aa)). Positions 402–452 (DAHLATQYSSSLASQASREGTVTSRQVRTIVEEVQDGKVVSSREQVHRSTH) are tail.

Belongs to the intermediate filament family. In terms of assembly, heterodimer of a type I and a type II keratin. Colocalizes with KRT8/KRT18 filament network.

It localises to the cytoplasm. The chain is Keratin, type I cytoskeletal 42 from Rattus norvegicus (Rat).